Here is a 487-residue protein sequence, read N- to C-terminus: DNA ligase (487 aa).

The active-site N6-AMP-lysine intermediate is the Lys-159. Arg-164, Arg-182, and Glu-217 together coordinate ATP. Glu-217 contributes to the a divalent metal cation binding site. An interaction with the sliding clamp region spans residues Glu-229–Ala-237. Glu-344 lines the a divalent metal cation pocket. Residues Arg-359 and Lys-365 each contribute to the ATP site.

The protein belongs to the ATP-dependent DNA ligase family. As to quaternary structure, interacts with the sliding clamp. A divalent metal cation serves as cofactor.

The enzyme catalyses ATP + (deoxyribonucleotide)n-3'-hydroxyl + 5'-phospho-(deoxyribonucleotide)m = (deoxyribonucleotide)n+m + AMP + diphosphate.. DNA ligase, which is expressed in the early stage of lytic development, has been implicated in T4 DNA synthesis and genetic recombination. It may also play a role in T4 DNA repair. The protein is DNA ligase (30) of Escherichia coli (Bacteriophage T6).